A 119-amino-acid chain; its full sequence is Mitochondrial coiled-coil domain protein 1 (119 aa).

A mitochondrion-targeting transit peptide spans 1–24 (MVLPLPWLSRYHFLRLLLPSWSLA). Residues 25–65 (PQGSHGCCSQNPKASMEEQTSSRGNGKMTSPPRGPGTHRTA) form a disordered region. Polar residues predominate over residues 31 to 52 (CCSQNPKASMEEQTSSRGNGKM). Residues 62–116 (HRTAELARAEELLEQQLELYQALLEGQEGAWEAQALVLKIQKLKEQMRRHQESLG) are a coiled coil.

Widely expressed. Expressed in adult and fetal liver, kidney and lung. Expressed in fetal brain. Weakly expressed in fetal spleen.

The protein localises to the mitochondrion. The chain is Mitochondrial coiled-coil domain protein 1 (MCCD1) from Homo sapiens (Human).